The chain runs to 148 residues: Transcriptional regulator MraZ (148 aa).

2 SpoVT-AbrB domains span residues 5 to 53 (ETAI…AESE) and 82 to 125 (AAHL…SEQA).

Belongs to the MraZ family. Forms oligomers.

The protein localises to the cytoplasm. It localises to the nucleoid. This chain is Transcriptional regulator MraZ, found in Stenotrophomonas maltophilia (strain R551-3).